A 597-amino-acid chain; its full sequence is 66 kDa protein (597 aa).

Disordered regions lie at residues 62 to 82 (VRLQSSPPRGPQSDRNLPSLQ), 160 to 198 (HSVPLSSEAPLQSSCSPRKLLHRPLSPPKPLHLHNFRQH), 218 to 315 (NQLA…SCRV), 329 to 411 (HFKS…LHHD), and 535 to 586 (SSPQ…ASAL). Polar residues predominate over residues 64–80 (LQSSPPRGPQSDRNLPS). Polar residues predominate over residues 218 to 234 (NQLAQAQQHPLPSSKPL). Residues 273 to 291 (PSSRGHLPSSTSSSSPRSN) are compositionally biased toward low complexity. Over residues 305-315 (SNSQDLRSCRV) the composition is skewed to polar residues. A compositionally biased stretch (basic residues) spans 389–400 (QTHHARLPHSKR). Residues 535–574 (SSPQSHSSESLRGDSPPSSHLPSSPSSACSGDSFASCSSF) are compositionally biased toward low complexity. A compositionally biased stretch (polar residues) spans 575–584 (GPSNPTSSAS).

This sequence belongs to the tymoviridae protein p69 family.

This Ononis protein is 66 kDa protein.